The sequence spans 1071 residues: SLIT-ROBO Rho GTPase-activating protein 2 (1071 aa).

Positions 22-325 (KEIRAQLTEQ…AVENLDATSD (304 aa)) constitute an F-BAR domain. Residues 181–203 (LKEAEKQEEKQIGKSVKQEDRQT) are compositionally biased toward basic and acidic residues. Residues 181-211 (LKEAEKQEEKQIGKSVKQEDRQTPRSPDSTA) form a disordered region. Phosphoserine is present on Ser-206. Residues 363–401 (QSELVQRCQQLQSRLSTLKIENEEVKKTMEATLQTIQDI) are a coiled coil. Ser-427, Ser-500, Ser-691, and Ser-695 each carry phosphoserine. Residues 489–679 (ARRSSTVRKQ…TIIIQHENIF (191 aa)) enclose the Rho-GAP domain. The interval 700 to 726 (CDSTHGETTSAEDSTQDVTAEHHTSDD) is disordered. Residues 705-717 (GETTSAEDSTQDV) show a composition bias toward polar residues. Ser-724 is modified (phosphoserine). The SH3 domain occupies 728-787 (CEPIEAIAKFDYVGRTARELSFKKGASLLLYQRASDDWWEGRHNGIDGLIPHQYIVVQDT). A Phosphoserine modification is found at Ser-795. Disordered stretches follow at residues 795–819 (SSPK…TGAS) and 838–918 (RKRP…DSPQ). The span at 855–868 (HGLGSSLTDSSSLG) shows a compositional bias: low complexity. 2 stretches are compositionally biased toward polar residues: residues 874-885 (RPSSQPIMSQNL) and 897-907 (GHGSLNSISRH). The residue at position 916 (Ser-916) is a Phosphoserine. Arg-927 is subject to Symmetric dimethylarginine; by PRMT5. Residue Ser-930 is modified to Phosphoserine. Positions 940–968 (EVIAQDIEATMNSALNELQELERQSSAKH) form a coiled coil. Residues 984–1012 (PVVAPTSEPSSPLHTQLLKDPEPAFQRSA) form a disordered region. Phosphoserine occurs at positions 990, 994, 1013, and 1027. Residues 1029-1071 (KMAAPVKPPATRPKPTVFPKTNATSPGVNSSASPQATDKSCTV) are disordered. The span at 1047 to 1071 (PKTNATSPGVNSSASPQATDKSCTV) shows a compositional bias: polar residues.

In terms of assembly, homodimer. Forms a heterooligomer with SRGAP1 and SRGAP3 through its F-BAR domain. Interacts (via SH3 domain) with GPHN. Interacts (via SH3 domain) with FMNL1 (activated by RAC1); regulates the actin filament severing activity of FMNL1 and actin dynamics. Interacts (via SH3 domain) with FMNL3. Interacts with RAC1; specifically stimulates RAC1 GTPase activity. Interacts (via F-BAR domain) with HOMER1. Interacts with ROBO1 and ROBO2. Interacts with FASLG. Interacts with PRMT5. Post-translationally, methylation at Arg-927 is required for the stimulation of cell migration, dimerization and localization at the plasma membrane protrusions.

Its subcellular location is the cell membrane. It is found in the cell projection. The protein resides in the dendritic spine. The protein localises to the postsynaptic density. It localises to the postsynaptic cell membrane. Its subcellular location is the lamellipodium. It is found in the cytoplasmic vesicle. The protein resides in the phagosome. The protein localises to the nucleus. It localises to the cytoplasm. Its subcellular location is the cytosol. In terms of biological role, postsynaptic RAC1 GTPase activating protein (GAP) that plays a key role in neuronal morphogenesis and migration mainly during development of the cerebral cortex. Regulates excitatory and inhibitory synapse maturation and density in cortical pyramidal neurons. SRGAP2/SRGAP2A limits excitatory and inhibitory synapse density through its RAC1-specific GTPase activating activity, while it promotes maturation of both excitatory and inhibitory synapses through its ability to bind to the postsynaptic scaffolding protein HOMER1 at excitatory synapses, and the postsynaptic protein GPHN at inhibitory synapses. Mechanistically, acts by binding and deforming membranes, thereby regulating actin dynamics to regulate cell migration and differentiation. Promotes cell repulsion and contact inhibition of locomotion: localizes to protrusions with curved edges and controls the duration of RAC1 activity in contact protrusions. In non-neuronal cells, may also play a role in cell migration by regulating the formation of lamellipodia and filopodia. This is SLIT-ROBO Rho GTPase-activating protein 2 from Mus musculus (Mouse).